A 290-amino-acid chain; its full sequence is Ribosomal protein L11 methyltransferase (290 aa).

S-adenosyl-L-methionine is bound by residues threonine 135, glycine 158, aspartate 180, and asparagine 227.

It belongs to the methyltransferase superfamily. PrmA family.

The protein localises to the cytoplasm. It catalyses the reaction L-lysyl-[protein] + 3 S-adenosyl-L-methionine = N(6),N(6),N(6)-trimethyl-L-lysyl-[protein] + 3 S-adenosyl-L-homocysteine + 3 H(+). Its function is as follows. Methylates ribosomal protein L11. This Mesorhizobium japonicum (strain LMG 29417 / CECT 9101 / MAFF 303099) (Mesorhizobium loti (strain MAFF 303099)) protein is Ribosomal protein L11 methyltransferase.